A 436-amino-acid polypeptide reads, in one-letter code: MNSKNRINNVGEGVDIEIPDTAHQISSDSWFQAAFVLTTSINSAYVLGYSGTVMVPLGWIGGVVGLILATAISLYANTLVAKLHEFGGKRHIRYRDLAGFIYGRKAYCLTWVLQYVNLFMINCGFIILAGSALKAVYVLFRDDHAMKLPHFIAIAGLICAVFAIGIPHLSALGIWLAVSTILSLIYIVVAIVLSVKDGVKAPSRDYEIQGSPLSKLFTITGAAATLVFVFNTGMLPEIQATVKQPVVKNMMKALYFQFTVGVLPMFAVVFIGYWAYGSSTSPYLLNNVNGPLWVKALANISAILQSVISLHIFASPTYEYMDTKFGIKGNPLALKNLLFRIMARGGYIAVSTLLSALLPFLGDFMSLTGAVSTFPLTFILANHMYYKAKNNKLNTLQKLCHWLNVVFFSLMSVAAAIAALRLIALDSKNFHVFADL.

The next 11 helical transmembrane spans lie at 29–49, 52–72, 118–138, 151–171, 172–192, 216–236, 254–274, 296–316, 345–365, 366–386, and 405–425; these read SWFQAAFVLTTSINSAYVLGY, TVMVPLGWIGGVVGLILATAI, LFMINCGFIILAGSALKAVYV, FIAIAGLICAVFAIGIPHLSA, LGIWLAVSTILSLIYIVVAIV, LFTITGAAATLVFVFNTGMLP, LYFQFTVGVLPMFAVVFIGYW, ALANISAILQSVISLHIFASP, GGYIAVSTLLSALLPFLGDFM, SLTGAVSTFPLTFILANHMYY, and VVFFSLMSVAAAIAALRLIAL.

The protein belongs to the amino acid/polyamine transporter 2 family. Amino acid/auxin permease (AAAP) (TC 2.A.18.3) subfamily. As to expression, expressed in epidermal cells of leaves, sepals and petals.

Its subcellular location is the cell membrane. Functionally, proline transporter that mediates proline and glycine betaine transport. When expressed in a heterologous system (yeast), imports L-proline, glycine betaine and GABA across the plasma membrane. This chain is Proline transporter 3 (PROT3), found in Arabidopsis thaliana (Mouse-ear cress).